The sequence spans 284 residues: MDAIKKKMLAMKMEKEVATDKAEQTEQSLRDLEAAKNTIEEDLSTLQKKYSNLENDFDNAKENLTVANTNLEASEKRVNECESEIQGLNRRIQLLEEDLERSEERLTSAQSKLEDASKAADESERGRKVLENRSQGDEERIDLLEKQLEEAKWIAEDADRKFDEAARKLAITEVDLERAEARLEAAEAKIVELEEELKVVGNNMKSLEISEQEASQREDSYEETIRDLTHRLKEAENRAAEAERTVSKLQKEVDRLEDELLAEKERYKSISDELDQTFAELAGY.

The stretch at 15–273 (KEVATDKAEQ…KERYKSISDE (259 aa)) forms a coiled coil. Positions 103–136 (EERLTSAQSKLEDASKAADESERGRKVLENRSQG) are disordered.

This sequence belongs to the tropomyosin family. In terms of assembly, homodimer. Post-translationally, the N-terminus is blocked. In terms of tissue distribution, expressed in mantle muscle (at protein level).

In terms of biological role, tropomyosin, in association with the troponin complex, plays a central role in the calcium dependent regulation of muscle contraction. This Todarodes pacificus (Japanese flying squid) protein is Tropomyosin Tod p 1.0102.